Reading from the N-terminus, the 475-residue chain is Secreted triacylglycerol lipase LIP5 (475 aa).

Positions 1-19 are cleaved as a signal peptide; it reads MYPCTLLMVLLCLAIMTHG. A disulfide bond links cysteine 129 and cysteine 300. The active-site Nucleophile is serine 213. Residues asparagine 246 and asparagine 312 are each glycosylated (N-linked (GlcNAc...) asparagine). The active site involves aspartate 360. The N-linked (GlcNAc...) asparagine glycan is linked to asparagine 369. Histidine 394 is an active-site residue. N-linked (GlcNAc...) asparagine glycosylation is present at asparagine 471.

This sequence belongs to the AB hydrolase superfamily. Lipase family. Class Lip subfamily.

It catalyses the reaction a triacylglycerol + H2O = a diacylglycerol + a fatty acid + H(+). The catalysed reaction is a monoacylglycerol + H2O = glycerol + a fatty acid + H(+). It carries out the reaction a diacylglycerol + H2O = a monoacylglycerol + a fatty acid + H(+). Secreted lipase involved in Dandruff and seborrheic dermatitis (D/SD) probably via lipase-mediated breakdown of sebaceous lipids and release of irritating free fatty acids. Has triacylglycerol lipase activity and is able to hydrolyze triolein. Mostly converts monoolein to di- and triolein, while free fatty acids are only produced in low amounts. The polypeptide is Secreted triacylglycerol lipase LIP5 (Malassezia globosa (strain ATCC MYA-4612 / CBS 7966) (Dandruff-associated fungus)).